The primary structure comprises 86 residues: V-type proton ATPase subunit e (86 aa).

The chain crosses the membrane as a helical span at residues 1–21 (MGILIPLVSVSAFWAIIGFGG). Topologically, residues 22 to 32 (PWIVPKGPNRG) are cytoplasmic. The chain crosses the membrane as a helical span at residues 33–53 (IIQLMIIMTAVCCWMFWIMVF). Residues 54 to 86 (LHQLNPLIGPQINVKTIRWISEKWGDAPNVINN) lie on the Lumenal side of the membrane.

Belongs to the V-ATPase e1/e2 subunit family. V-ATPase is a heteromultimeric enzyme made up of two complexes: the ATP-hydrolytic V1 complex and the proton translocation V0 complex. The V1 complex consists of three catalytic AB heterodimers that form a heterohexamer, three peripheral stalks each consisting of EG heterodimers, one central rotor including subunits D and F, and the regulatory subunits C and H. The proton translocation complex V0 consists of the proton transport subunit a, a ring of proteolipid subunits c9c'', rotary subunit d, subunits e and f, and the accessory subunits vah-19/Ac45 and vah-20/PRR.

It localises to the apical cell membrane. Subunit of the V0 complex of vacuolar(H+)-ATPase (V-ATPase), a multisubunit enzyme composed of a peripheral complex (V1) that hydrolyzes ATP and a membrane integral complex (V0) that translocates protons. V-ATPase is responsible for acidifying and maintaining the pH of intracellular compartments and in some cell types, is targeted to the plasma membrane, where it is responsible for acidifying the extracellular environment. During embryonic development, the V-ATPase is required to repress fusion of epidermal cells probably by negatively regulating eff-1-mediated cell fusion. This Caenorhabditis elegans protein is V-type proton ATPase subunit e.